The following is a 463-amino-acid chain: Zinc finger protein PLAGL1 (463 aa).

7 consecutive C2H2-type zinc fingers follow at residues 4–26, 32–56, 62–84, 91–113, 120–142, 156–178, and 184–207; these read YPCQ…NYSH, YKCL…MATH, HQCA…LQTH, FGCE…LALH, LTCG…LKAH, HQCD…LVVH, and FLCQ…KKTH. The segment at 285 to 310 is disordered; the sequence is LHPVAPPTSPPQPLQNHKYNTSSTSY. The segment covering 287–297 has biased composition (pro residues); sequence PVAPPTSPPQP. Residues 298 to 310 show a composition bias toward polar residues; it reads LQNHKYNTSSTSY.

This sequence belongs to the krueppel C2H2-type zinc-finger protein family. As to quaternary structure, interacts with THRSP.

Its subcellular location is the nucleus. Its function is as follows. Acts as a transcriptional activator. Involved in the transcriptional regulation of type 1 receptor for pituitary adenylate cyclase-activating polypeptide. This Sus scrofa (Pig) protein is Zinc finger protein PLAGL1 (PLAGL1).